A 491-amino-acid polypeptide reads, in one-letter code: Probable cobyric acid synthase (491 aa).

The GATase cobBQ-type domain maps to 252-444 (PVEVNIVKFS…LHGILENFEF (193 aa)). Catalysis depends on cysteine 330, which acts as the Nucleophile. Histidine 436 is a catalytic residue.

The protein belongs to the CobB/CobQ family. CobQ subfamily.

The protein operates within cofactor biosynthesis; adenosylcobalamin biosynthesis. Catalyzes amidations at positions B, D, E, and G on adenosylcobyrinic A,C-diamide. NH(2) groups are provided by glutamine, and one molecule of ATP is hydrogenolyzed for each amidation. This is Probable cobyric acid synthase from Methanococcus vannielii (strain ATCC 35089 / DSM 1224 / JCM 13029 / OCM 148 / SB).